The following is a 316-amino-acid chain: Pantothenate kinase (316 aa).

ATP is bound at residue 95–102 (GSVAVGKS).

The protein belongs to the prokaryotic pantothenate kinase family.

The protein localises to the cytoplasm. The enzyme catalyses (R)-pantothenate + ATP = (R)-4'-phosphopantothenate + ADP + H(+). It participates in cofactor biosynthesis; coenzyme A biosynthesis; CoA from (R)-pantothenate: step 1/5. This is Pantothenate kinase from Klebsiella pneumoniae (strain 342).